The chain runs to 431 residues: Serine--tRNA ligase (431 aa).

Position 235–237 (235–237 (TAE)) interacts with L-serine. ATP-binding positions include 266 to 268 (RRE) and valine 282. Glutamate 289 serves as a coordination point for L-serine. 353 to 356 (EASS) is an ATP binding site. Serine 389 is an L-serine binding site.

It belongs to the class-II aminoacyl-tRNA synthetase family. Type-1 seryl-tRNA synthetase subfamily. In terms of assembly, homodimer. The tRNA molecule binds across the dimer.

The protein resides in the cytoplasm. It catalyses the reaction tRNA(Ser) + L-serine + ATP = L-seryl-tRNA(Ser) + AMP + diphosphate + H(+). It carries out the reaction tRNA(Sec) + L-serine + ATP = L-seryl-tRNA(Sec) + AMP + diphosphate + H(+). It participates in aminoacyl-tRNA biosynthesis; selenocysteinyl-tRNA(Sec) biosynthesis; L-seryl-tRNA(Sec) from L-serine and tRNA(Sec): step 1/1. In terms of biological role, catalyzes the attachment of serine to tRNA(Ser). Is also able to aminoacylate tRNA(Sec) with serine, to form the misacylated tRNA L-seryl-tRNA(Sec), which will be further converted into selenocysteinyl-tRNA(Sec). The chain is Serine--tRNA ligase from Pelodictyon phaeoclathratiforme (strain DSM 5477 / BU-1).